A 1052-amino-acid polypeptide reads, in one-letter code: Multidrug resistance protein MdtB (1052 aa).

A run of 11 helical transmembrane segments spans residues 15 to 37 (LFIL…GIIG), 345 to 362 (FELL…YLFL), 367 to 389 (ATII…MYFL), 396 to 418 (LTLM…VIEN), 438 to 460 (GEIG…PLLF), 472 to 494 (FAVT…TPMM), 535 to 557 (HPWL…YLLI), 867 to 889 (LWLI…ESFI), 909 to 931 (LMLT…IGIV), 968 to 990 (ILMT…GVGA), and 1000 to 1022 (MVGG…YLLF). A disordered region spans residues 1032–1052 (KNRHRDEDIDSSELLNGQEPQ).

Belongs to the resistance-nodulation-cell division (RND) (TC 2.A.6) family. MdtB subfamily. As to quaternary structure, part of a tripartite efflux system composed of MdtA, MdtB and MdtC. MdtB forms a heteromultimer with MdtC.

The protein localises to the cell inner membrane. The sequence is that of Multidrug resistance protein MdtB from Yersinia pseudotuberculosis serotype I (strain IP32953).